The primary structure comprises 350 residues: Adenine deaminase (350 aa).

Residues H24, H26, and H207 each contribute to the Zn(2+) site. E210 functions as the Proton donor in the catalytic mechanism. D288 serves as a coordination point for Zn(2+). Substrate is bound at residue D289.

It belongs to the metallo-dependent hydrolases superfamily. Adenosine and AMP deaminases family. Adenine deaminase type 2 subfamily. Requires Zn(2+) as cofactor.

It carries out the reaction adenine + H2O + H(+) = hypoxanthine + NH4(+). Functionally, catalyzes the hydrolytic deamination of adenine to hypoxanthine. Plays an important role in the purine salvage pathway and in nitrogen catabolism. This is Adenine deaminase from Paraburkholderia xenovorans (strain LB400).